Reading from the N-terminus, the 95-residue chain is UPF0213 protein ESA_03545 (95 aa).

One can recognise a GIY-YIG domain in the interval 2–77 (EEWFLYLIRC…KQLTKRQKEQ (76 aa)).

This sequence belongs to the UPF0213 family.

The polypeptide is UPF0213 protein ESA_03545 (Cronobacter sakazakii (strain ATCC BAA-894) (Enterobacter sakazakii)).